A 286-amino-acid chain; its full sequence is Pyridoxal kinase PdxY (286 aa).

Substrate is bound by residues S9 and 44-45; that span reads TQ. Residues D111, E148, and K181 each contribute to the ATP site. Residue D222 participates in substrate binding.

This sequence belongs to the pyridoxine kinase family. PdxY subfamily. As to quaternary structure, homodimer. The cofactor is Mg(2+).

The catalysed reaction is pyridoxal + ATP = pyridoxal 5'-phosphate + ADP + H(+). It participates in cofactor metabolism; pyridoxal 5'-phosphate salvage; pyridoxal 5'-phosphate from pyridoxal: step 1/1. Functionally, pyridoxal kinase involved in the salvage pathway of pyridoxal 5'-phosphate (PLP). Catalyzes the phosphorylation of pyridoxal to PLP. This chain is Pyridoxal kinase PdxY, found in Pasteurella multocida (strain Pm70).